A 399-amino-acid chain; its full sequence is Myb-related transcription factor, partner of profilin (399 aa).

The region spanning 12–84 (TTRLRKPRFS…EVQKRWNDFK (73 aa)) is the Myb-like domain. Positions 83 to 86 (FKRR) match the Nuclear localization signal motif. 4 disordered regions span residues 87–108 (TKEK…AEDA), 127–261 (PGAG…PSLD), 297–332 (LLPG…PKVE), and 358–399 (APRS…WKSP). Positions 127–136 (PGAGAGAEEP) are enriched in low complexity. A compositionally biased stretch (pro residues) spans 137-149 (PAAPSSQPPPPSA). Residues 156–170 (LSEDRREDRRADTSA) show a composition bias toward basic and acidic residues. Composition is skewed to pro residues over residues 219-252 (SPPP…PPPT), 305-329 (SLPP…PPAP), and 366-377 (PRPPPAPLPPHD). A compositionally biased stretch (basic residues) spans 381–399 (HKRRKGFPTRKRRGRWKSP). 2 short sequence motifs (nuclear localization signal) span residues 382 to 385 (KRRK) and 390 to 393 (RKRR).

Interacts with PFN1. Homodimer and heterodimer with PFN1.

Its subcellular location is the nucleus. In terms of biological role, transcriptional repressor; DNA-binding protein that specifically recognizes the core sequence 5'-YAAC[GT]G-3'. Dimerization with PFN1 reduces its DNA-binding capacity. The chain is Myb-related transcription factor, partner of profilin (MYPOP) from Homo sapiens (Human).